A 154-amino-acid polypeptide reads, in one-letter code: MLSCWVLLLALLGGVCALPAPLSYPQALIQAVDSYNQRPEVQNAFRLLSADPEPGPGVDLSTLRALNFTIMETECTPSARLPVDDCDFKENGVIRDCSGPVSVLQDTPEINLRCRDASSDPVLVQRGRFGRFLRKIRRFRPKVTITIQGSARFG.

Residues 1–17 form the signal peptide; it reads MLSCWVLLLALLGGVCA. The propeptide occupies 18–122; sequence LPAPLSYPQA…RCRDASSDPV (105 aa). 2 disulfide bridges follow: Cys-75-Cys-86 and Cys-97-Cys-114.

The protein belongs to the cathelicidin family. In terms of tissue distribution, detected in trachea, lung, proventriculus, duodenum, jejunum, ileum, caeca, colon, caecal tonsil, bursa of Fabricius, kidney, ovary, testis, thymus, liver, spleen, bone marrow, skin, uropygial gland, muscle and brain.

The protein resides in the secreted. Functionally, binds bacterial lipopolysaccharide (LPS). Has potent antimicrobial activity against Gram-positive and Gram-negative bacteria (in vitro). Has hemolytic activity (in vitro). May play a role in the innate immune response. The sequence is that of Cathelicidin-2 (CATHL2) from Gallus gallus (Chicken).